Consider the following 695-residue polypeptide: Putative pentatricopeptide repeat-containing protein At1g77010, mitochondrial (695 aa).

Residues 1-64 (MILKYNSSYR…KGFLSSIVIV (64 aa)) constitute a mitochondrion transit peptide. PPR repeat units lie at residues 61–91 (IVIV…MPDR), 92–122 (NYFS…MPER), 123–157 (DGYS…DVVT), 159–184 (NSLL…LNFS), 186–220 (DAIT…GVEC), 221–251 (DSKM…IREP), 252–282 (DDHS…KSNR), 283–313 (CVIL…MRNE), 317–351 (DSRT…GLID), 352–382 (DIVV…VESY), 383–417 (DTIL…SLIS), 418–448 (WNSM…DLPT), 449–483 (DEVS…GLDS), 484–514 (DQVV…MVKS), 515–549 (DEVP…GIRP), 550–585 (TQIT…GFVP), and 586–616 (DKEH…MPFD). Residues 621–695 (MWSSILRGCV…KNPGSSWTDC (75 aa)) form a type E motif; degenerate region.

This sequence belongs to the PPR family. PCMP-E subfamily.

It is found in the mitochondrion. This chain is Putative pentatricopeptide repeat-containing protein At1g77010, mitochondrial (PCMP-E5), found in Arabidopsis thaliana (Mouse-ear cress).